The chain runs to 318 residues: Na(+)-translocating NADH-quinone reductase subunit C (318 aa).

A helical transmembrane segment spans residues 13–33 (WYIILFIFVLSLVAGTLLSSV). Residue threonine 281 is modified to FMN phosphoryl threonine.

The protein belongs to the NqrC family. Composed of six subunits; NqrA, NqrB, NqrC, NqrD, NqrE and NqrF. The cofactor is FMN.

Its subcellular location is the cell inner membrane. It catalyses the reaction a ubiquinone + n Na(+)(in) + NADH + H(+) = a ubiquinol + n Na(+)(out) + NAD(+). In terms of biological role, NQR complex catalyzes the reduction of ubiquinone-1 to ubiquinol by two successive reactions, coupled with the transport of Na(+) ions from the cytoplasm to the periplasm. NqrA to NqrE are probably involved in the second step, the conversion of ubisemiquinone to ubiquinol. The sequence is that of Na(+)-translocating NADH-quinone reductase subunit C from Chlamydia muridarum (strain MoPn / Nigg).